We begin with the raw amino-acid sequence, 263 residues long: SPRY domain-containing SOCS box protein 2 (263 aa).

Residues 1-16 (MGQTALAGGSSSTPTP) show a composition bias toward polar residues. Residues 1 to 48 (MGQTALAGGSSSTPTPQALYPDLSCPEGLEELLSAPPPDLGAQRRHGW) are disordered. A B30.2/SPRY domain is found at 26–221 (PEGLEELLSA…VRIRYLGERR (196 aa)). Residues 222–263 (AEPHSLLHLSRLCVRHNLGDTRLGQVSALPLPPAMKRYLLYQ) enclose the SOCS box domain.

Belongs to the SPSB family. In terms of assembly, component of the probable ECS(SPSB2) E3 ubiquitin-protein ligase complex which contains CUL5, RNF7/RBX2, Elongin BC complex and SPSB2. Interacts with CUL5, RNF7, ELOB and ELOC. Interacts with MET. Interacts (via B30.2/SPRY domain) with PAWR; this interaction occurs in association with the Elongin BC complex. Interacts with NOS2. As to quaternary structure, (Microbial infection) Interacts (via C-terminus) with HCV envelope glycoprotein E1. Interacts (via C-terminus) with HCV non-structural protein 5A; this interaction targets NS5A for ubiquitination and degradation.

It is found in the cytoplasm. The protein resides in the cytosol. Its pathway is protein modification; protein ubiquitination. Its function is as follows. Substrate recognition component of a SCF-like ECS (Elongin BC-CUL2/5-SOCS-box protein) E3 ubiquitin-protein ligase complex which mediates the ubiquitination and subsequent proteasomal degradation of target proteins. Negatively regulates nitric oxide (NO) production and limits cellular toxicity in activated macrophages by mediating the ubiquitination and proteasomal degradation of NOS2. Acts as a bridge which links NOS2 with the ECS E3 ubiquitin ligase complex components ELOC and CUL5. This is SPRY domain-containing SOCS box protein 2 (SPSB2) from Homo sapiens (Human).